The following is a 417-amino-acid chain: MIPGLINARVTFHNSPVHALERFTFRDVGAALEGFRAGSGLDECVIVQTCNRVELFGASASPDMGSIRRTWASLAGIDESLFGGHLESSGGGEVLEHLLRLTSGLDSMVVGEEQILGQVKNAITSARTSGASGRRLNTLFDRAIRSGTRIRNSTGIGSGGVSVGSMAVRLVEENMDDLHSRSILLIGTGEVSTLVAKSLGKRGYDFSVASRTLQRSQAFCSAMGGSPVLFEDVLDGFGGYDVLFVATGAPYFLVTYDKISEVLESRGGMMILDLSNPRTVDEKVATLGGIKLMNLDQIAEMVSKNMRNRMSSVGKVEQMISGEVPVMEAAMNRLDAEPIAEAAFKEADALRRRELAKALQMLGNIGGNDAKVIDDLTRALVESIMSAPMNNLRRASEEGDADVVDAAARLFDYRRPG.

Substrate-binding positions include 49-52 (TCNR), serine 107, 112-114 (EEQ), and glutamine 118. Residue cysteine 50 is the Nucleophile of the active site. An NADP(+)-binding site is contributed by 187 to 192 (GTGEVS).

It belongs to the glutamyl-tRNA reductase family. As to quaternary structure, homodimer.

It carries out the reaction (S)-4-amino-5-oxopentanoate + tRNA(Glu) + NADP(+) = L-glutamyl-tRNA(Glu) + NADPH + H(+). It functions in the pathway porphyrin-containing compound metabolism; protoporphyrin-IX biosynthesis; 5-aminolevulinate from L-glutamyl-tRNA(Glu): step 1/2. Catalyzes the NADPH-dependent reduction of glutamyl-tRNA(Glu) to glutamate 1-semialdehyde (GSA). This chain is Glutamyl-tRNA reductase, found in Cenarchaeum symbiosum (strain A).